An 874-amino-acid chain; its full sequence is Alanine--tRNA ligase (874 aa).

Zn(2+)-binding residues include H562, H566, C665, and H669.

This sequence belongs to the class-II aminoacyl-tRNA synthetase family. Zn(2+) is required as a cofactor.

Its subcellular location is the cytoplasm. The enzyme catalyses tRNA(Ala) + L-alanine + ATP = L-alanyl-tRNA(Ala) + AMP + diphosphate. Its function is as follows. Catalyzes the attachment of alanine to tRNA(Ala) in a two-step reaction: alanine is first activated by ATP to form Ala-AMP and then transferred to the acceptor end of tRNA(Ala). Also edits incorrectly charged Ser-tRNA(Ala) and Gly-tRNA(Ala) via its editing domain. The polypeptide is Alanine--tRNA ligase (Pseudomonas syringae pv. tomato (strain ATCC BAA-871 / DC3000)).